We begin with the raw amino-acid sequence, 141 residues long: MAKKVANVVKLQIPAGKATPAPPVGPALGQAGINIMGFTKDFNARTADQAGMIIPVVITVYEDRSFDFITKTPPAAVLLKKAAGVESGSGEPNTKKVATVTKDQVKQIAETKMQDLNAADVEAAMRMIEGTARSMGFTVEG.

It belongs to the universal ribosomal protein uL11 family. As to quaternary structure, part of the ribosomal stalk of the 50S ribosomal subunit. Interacts with L10 and the large rRNA to form the base of the stalk. L10 forms an elongated spine to which L12 dimers bind in a sequential fashion forming a multimeric L10(L12)X complex. One or more lysine residues are methylated.

Forms part of the ribosomal stalk which helps the ribosome interact with GTP-bound translation factors. The chain is Large ribosomal subunit protein uL11 from Lactiplantibacillus plantarum (strain ATCC BAA-793 / NCIMB 8826 / WCFS1) (Lactobacillus plantarum).